We begin with the raw amino-acid sequence, 331 residues long: Type II secretion system protein K (331 aa).

A propeptide spans 1–9 (leader sequence); it reads MPSCRRQGG. Residues 8–27 traverse the membrane as a helical segment; it reads GGMALLVVLLILSVMVIIAS. Topologically, residues 28–331 are periplasmic; it reads NMSGRLQLEL…MLRRLNGGAE (304 aa).

The protein belongs to the GSP K family. In terms of assembly, type II secretion is composed of four main components: the outer membrane complex, the inner membrane complex, the cytoplasmic secretion ATPase and the periplasm-spanning pseudopilus. Interacts with core component ExeG. In terms of processing, cleaved by prepilin peptidase.

It is found in the cell inner membrane. Component of the type II secretion system required for the energy-dependent secretion of extracellular factors such as proteases and toxins from the periplasm. Plays a role in pseudopilus assembly and seems to control its length. Interacts with the pseudopilus tip complex that is critical for the recognition and binding of secretion substrates. This chain is Type II secretion system protein K (exeK), found in Aeromonas hydrophila.